We begin with the raw amino-acid sequence, 427 residues long: 12-alpha,13-alpha-dihydroxyfumitremorgin C prenyltransferase (427 aa).

Substrate is bound at residue E94. Dimethylallyl diphosphate-binding residues include R105, K192, Y194, Y268, Q353, Y355, Y419, and Y423.

The protein belongs to the tryptophan dimethylallyltransferase family.

The catalysed reaction is 12alpha,13alpha-dihydroxyfumitremorgin C + dimethylallyl diphosphate = fumitremorgin B + diphosphate. The protein operates within mycotoxin biosynthesis. In terms of biological role, 12-alpha,13-alpha-dihydroxyfumitremorgin C prenyltransferase; part of the gene cluster that mediates the biosynthesis of fumitremorgins, indole alkaloids that carry not only intriguing chemical structures, but also interesting biological and pharmacological activities. The biosynthesis of fumitremorgin-type alkaloids begins by condensation of the two amino acids L-tryptophan and L-proline to brevianamide F, catalyzed by the non-ribosomal peptide synthetase ftmA. Brevianamide F is then prenylated by the prenyltransferase ftmPT1/ftmB in the presence of dimethylallyl diphosphate, resulting in the formation of tryprostatin B. The three cytochrome P450 monooxygenases, ftmP450-1/ftmC, ftmP450-2/ftmE and ftmP450-3/FtmG, are responsible for the conversion of tryprostatin B to 6-hydroxytryprostatin B, tryprostatin A to fumitremorgin C and fumitremorgin C to 12,13-dihydroxyfumitremorgin C, respectively. The putative methyltransferase ftmMT/ftmD is expected for the conversion of 6-hydroxytryprostatin B to tryprostatin A. FtmPT2/FtmH catalyzes the prenylation of 12,13-dihydroxyfumitre-morgin C in the presence of dimethylallyl diphosphate, resulting in the formation of fumitremorgin B. Fumitremorgin B is further converted to verruculogen by ftmOx1/ftmF via the insertion of an endoperoxide bond between the two prenyl moieties. In some fungal species, verruculogen is further converted to fumitremorgin A, but the enzymes involved in this step have not been identified yet. The polypeptide is 12-alpha,13-alpha-dihydroxyfumitremorgin C prenyltransferase (Aspergillus fumigatus (strain ATCC MYA-4609 / CBS 101355 / FGSC A1100 / Af293) (Neosartorya fumigata)).